Here is a 2974-residue protein sequence, read N- to C-terminus: Mediator of RNA polymerase II transcription subunit 13 (2974 aa).

Composition is skewed to basic and acidic residues over residues 284-299 (EKEPENVTEERQKTPE), 340-367 (MFEPDLRQDKPKEETAAEKEKRMAAREV), 374-390 (RREERRREMEKQRRADD), and 624-633 (SREKRKEYQP). 12 disordered regions span residues 284-309 (EKEPENVTEERQKTPEAEPPAPPQTT), 340-394 (MFEP…NLED), 624-654 (SREKRKEYQPYHRKRPAKSVKEKKKKAKRKV), 677-749 (FNAW…FADI), 764-801 (LYNPAGGDIEEGDETSNESPDEKTPEGSPNGSPRPKEE), 1032-1063 (PHGSFDHDSEPEFDEQRTGLGEGTSDQYQDGE), 1099-1134 (GMLSPPASNEMPKGGPLSVGPASIESQGLNQIYPTP), 1140-1159 (LQADASQAHSPSIGGKFRST), 1281-1342 (TLAR…TPTY), 1416-1486 (QGGL…DATA), 2052-2078 (ELKKADEHPAPPSTQSENSEGNAATPA), and 2247-2309 (QDEA…PAGM). Residues 351–396 (KEETAAEKEKRMAAREVRRLRRQRREERRREMEKQRRADDNLEDYD) adopt a coiled-coil conformation. Composition is skewed to basic residues over residues 634–654 (YHRKRPAKSVKEKKKKAKRKV) and 677–688 (FNAWKQKKKGPP). Residues 689-717 (PKKDLAKKEAAADKDKDKDKEKDKEKDKD) are compositionally biased toward basic and acidic residues. Basic and acidic residues predominate over residues 1035-1048 (SFDHDSEPEFDEQR). 2 stretches are compositionally biased toward polar residues: residues 1122–1134 (IESQGLNQIYPTP) and 1140–1149 (LQADASQAHS). 2 stretches are compositionally biased toward pro residues: residues 1284–1299 (RPPPGATSPLPPPTPM) and 1326–1340 (PAYPPTPGPYPPTTP). Over residues 1443 to 1464 (IRNTDAPNDPTVSKLQSAVSRN) the composition is skewed to polar residues. A compositionally biased stretch (low complexity) spans 1473–1486 (AATSIPTATDDATA). The span at 2064 to 2073 (STQSENSEGN) shows a compositional bias: polar residues. The stretch at 2220–2301 (AVEGRLKRQK…EQYPAEESQA (82 aa)) forms a coiled coil. 2 stretches are compositionally biased toward basic and acidic residues: residues 2247–2258 (QDEADKREKMDE) and 2281–2292 (EEKKRNKQKENE). Residues 2347–2974 (WKQRDTRVQN…LYHSVARLLV (628 aa)) form a mediates transcriptional repression region.

Belongs to the Mediator complex subunit 13 family. In terms of assembly, component of the Mediator complex.

It localises to the nucleus. Its function is as follows. Component of the Mediator complex, a coactivator involved in regulated gene transcription of nearly all RNA polymerase II-dependent genes. Mediator functions as a bridge to convey information from gene-specific regulatory proteins to the basal RNA polymerase II transcription machinery. Mediator is recruited to promoters by direct interactions with regulatory proteins and serves as a scaffold for the assembly of a functional preinitiation complex with RNA polymerase II and the general transcription factors. The chain is Mediator of RNA polymerase II transcription subunit 13 (let-19) from Caenorhabditis briggsae.